The chain runs to 453 residues: Probable phenylalanine--tRNA ligase, mitochondrial (453 aa).

The transit peptide at 1–27 (MLLTLRVQGARHWLKSTRCLASSAAPA) directs the protein to the mitochondrion. Substrate-binding positions include 142–145 (TAHQ), Arg164, 171–173 (THY), 178–180 (QAD), Glu285, and Phe310. The FDX-ACB domain maps to 356 to 453 (SHYPQCTNDL…SVDSFNVQIR (98 aa)).

The protein belongs to the class-II aminoacyl-tRNA synthetase family.

It localises to the mitochondrion matrix. It catalyses the reaction tRNA(Phe) + L-phenylalanine + ATP = L-phenylalanyl-tRNA(Phe) + AMP + diphosphate + H(+). In terms of biological role, is responsible for the charging of tRNA(Phe) with phenylalanine in mitochondrial translation. The protein is Probable phenylalanine--tRNA ligase, mitochondrial of Drosophila melanogaster (Fruit fly).